Consider the following 126-residue polypeptide: Fluoride-specific ion channel FluC 2 (126 aa).

A run of 4 helical transmembrane segments spans residues 11 to 31, 34 to 54, 66 to 86, and 93 to 113; these read IFLI…LCEL, GQLG…MIMY, GKIA…TFAV, and FIPA…GVFF. Na(+)-binding residues include Gly76 and Thr79.

This sequence belongs to the fluoride channel Fluc/FEX (TC 1.A.43) family.

The protein resides in the cell membrane. The enzyme catalyses fluoride(in) = fluoride(out). Na(+) is not transported, but it plays an essential structural role and its presence is essential for fluoride channel function. Functionally, fluoride-specific ion channel. Important for reducing fluoride concentration in the cell, thus reducing its toxicity. The polypeptide is Fluoride-specific ion channel FluC 2 (Methanosarcina acetivorans (strain ATCC 35395 / DSM 2834 / JCM 12185 / C2A)).